We begin with the raw amino-acid sequence, 486 residues long: MTFQAIATHPQDWTGDTLALGLTTAAIGETLSSELQKLDQQWNGVLQELISDSEFKAKLAETTTTRIGGSIRKLILVGLGESPTTEDYRRAAAAVAKQARSFKSQTLAIAFPPSDDPAAIASAIVEGISLALYKDQRFKSEPDTASGPSSIELLGLAGQEAAIARAEQVVAGVELARQLVAAPANVVTPVTMADTAQELAAELGLELEILEADECEKRGMGAFLGVAKASDLPPKFIHLTYRPESTPRRKLAIVGKGLTFDSGGYNIKGAGSGIEMMKTDMGGAAATLGAAKAIGLIKPDVEVHFISAVTENMISGRGMHPGDILTASNGKTIEVNNTDAEGRLTLADALVFADGLGVDAIVDLATLTGACIIALGDDIAGLWSPSDDLAEQLLQAGKAAGEKLWRLPLEEPYLDGLKSPVADYKNTGPRAGGSITAALFLKQFVKHPVWAHLDVAGPVWSDKEKHYNPAGATGYGVRTLVNWVLS.

Belongs to the peptidase M17 family. Requires Mn(2+) as cofactor.

Its subcellular location is the cytoplasm. The catalysed reaction is Release of an N-terminal amino acid, Xaa-|-Yaa-, in which Xaa is preferably Leu, but may be other amino acids including Pro although not Arg or Lys, and Yaa may be Pro. Amino acid amides and methyl esters are also readily hydrolyzed, but rates on arylamides are exceedingly low.. It catalyses the reaction Release of an N-terminal amino acid, preferentially leucine, but not glutamic or aspartic acids.. In terms of biological role, presumably involved in the processing and regular turnover of intracellular proteins. Catalyzes the removal of unsubstituted N-terminal amino acids from various peptides. In Synechococcus elongatus (strain ATCC 33912 / PCC 7942 / FACHB-805) (Anacystis nidulans R2), this protein is Probable cytosol aminopeptidase (pepA).